The following is a 308-amino-acid chain: Ribonuclease HIII (308 aa).

Residues 91–308 (KNVIGSDEVG…TEKALKMVKK (218 aa)) enclose the RNase H type-2 domain. 3 residues coordinate a divalent metal cation: Asp-97, Glu-98, and Asp-202.

This sequence belongs to the RNase HII family. RnhC subfamily. It depends on Mn(2+) as a cofactor. The cofactor is Mg(2+).

It localises to the cytoplasm. The catalysed reaction is Endonucleolytic cleavage to 5'-phosphomonoester.. Functionally, endonuclease that specifically degrades the RNA of RNA-DNA hybrids. This chain is Ribonuclease HIII, found in Listeria monocytogenes serotype 4b (strain CLIP80459).